We begin with the raw amino-acid sequence, 250 residues long: Tryptophan synthase alpha chain (250 aa).

Active-site proton acceptor residues include Glu31 and Asp42.

It belongs to the TrpA family. Tetramer of two alpha and two beta chains.

The enzyme catalyses (1S,2R)-1-C-(indol-3-yl)glycerol 3-phosphate + L-serine = D-glyceraldehyde 3-phosphate + L-tryptophan + H2O. Its pathway is amino-acid biosynthesis; L-tryptophan biosynthesis; L-tryptophan from chorismate: step 5/5. Its function is as follows. The alpha subunit is responsible for the aldol cleavage of indoleglycerol phosphate to indole and glyceraldehyde 3-phosphate. This Staphylococcus carnosus (strain TM300) protein is Tryptophan synthase alpha chain.